Reading from the N-terminus, the 171-residue chain is uncharacterized protein (171 aa).

In terms of domain architecture, HTH marR-type spans 33–166 (AISIATNLYR…LTGLLRKVAD (134 aa)). Residues 80 to 103 (TRKIAELSGISTATASNVIKTLEK) constitute a DNA-binding region (H-T-H motif).

This is an uncharacterized protein from Bacillus subtilis (strain 168).